The following is a 276-amino-acid chain: Phosphatidylglycerol--prolipoprotein diacylglyceryl transferase (276 aa).

The next 7 membrane-spanning stretches (helical) occupy residues 17–37, 59–79, 94–114, 132–152, 177–197, 208–225, and 235–255; these read FGPF…VLGW, FLSW…ILFY, VWDG…AILI, VPVP…GELW, PSEL…LLIA, GYLG…RTTA, and LGYL…MIVI. R142 contributes to the a 1,2-diacyl-sn-glycero-3-phospho-(1'-sn-glycerol) binding site.

The protein belongs to the Lgt family.

It localises to the cell inner membrane. It catalyses the reaction L-cysteinyl-[prolipoprotein] + a 1,2-diacyl-sn-glycero-3-phospho-(1'-sn-glycerol) = an S-1,2-diacyl-sn-glyceryl-L-cysteinyl-[prolipoprotein] + sn-glycerol 1-phosphate + H(+). Its pathway is protein modification; lipoprotein biosynthesis (diacylglyceryl transfer). Catalyzes the transfer of the diacylglyceryl group from phosphatidylglycerol to the sulfhydryl group of the N-terminal cysteine of a prolipoprotein, the first step in the formation of mature lipoproteins. This is Phosphatidylglycerol--prolipoprotein diacylglyceryl transferase from Acidiphilium cryptum (strain JF-5).